Reading from the N-terminus, the 110-residue chain is Cytochrome c (110 aa).

Cys21, Cys24, His25, and Met87 together coordinate heme c.

This sequence belongs to the cytochrome c family. Post-translationally, binds 1 heme c group covalently per subunit.

It localises to the mitochondrion intermembrane space. Its function is as follows. Electron carrier protein. The oxidized form of the cytochrome c heme group can accept an electron from the heme group of the cytochrome c1 subunit of cytochrome reductase. Cytochrome c then transfers this electron to the cytochrome oxidase complex, the final protein carrier in the mitochondrial electron-transport chain. The polypeptide is Cytochrome c (CYCK) (Kluyveromyces lactis (strain ATCC 8585 / CBS 2359 / DSM 70799 / NBRC 1267 / NRRL Y-1140 / WM37) (Yeast)).